The sequence spans 798 residues: Interphotoreceptor matrix proteoglycan 1 (798 aa).

Residues 1 to 20 (MNLEIKHAILVLWIFLQVQG) form the signal peptide. Asn142 is a glycosylation site (N-linked (GlcNAc...) asparagine). Positions 238–360 (SEEKVEFSIS…PEAYLTAADL (123 aa)) constitute an SEA 1 domain. Residues Thr442 and Thr445 are each glycosylated (O-linked (GalNAc...) threonine). The SEA 2 domain occupies 574-687 (HELVVFFSLR…YSLDIEPADQ (114 aa)). Residues Asn595 and Asn619 are each glycosylated (N-linked (GlcNAc...) asparagine). Positions 624 to 632 (KQLEILSFR) match the Heparin- and hyaluronan-binding motif. N-linked (GlcNAc...) asparagine glycans are attached at residues Asn633 and Asn651. The disordered stretch occupies residues 741-798 (ASQGQATPCRPPDHSTNQARQPSVKKLQRQQNKVVKKRNSELSATDFEELDDQDWEGN). Residues 786–798 (DFEELDDQDWEGN) show a composition bias toward acidic residues.

Highly glycosylated (N- and O-linked carbohydrates and sialic acid).

The protein localises to the cell projection. The protein resides in the cilium. Its subcellular location is the photoreceptor outer segment. It localises to the secreted. It is found in the extracellular space. The protein localises to the extracellular matrix. The protein resides in the interphotoreceptor matrix. Its subcellular location is the photoreceptor inner segment. Chondroitin sulfate-, heparin- and hyaluronan-binding protein. May serve to form a basic macromolecular scaffold comprising the insoluble interphotoreceptor matrix. The chain is Interphotoreceptor matrix proteoglycan 1 from Rattus norvegicus (Rat).